The following is a 263-amino-acid chain: Pimeloyl-[acyl-carrier protein] methyl ester esterase (263 aa).

Residues tryptophan 23, serine 90–leucine 91, and phenylalanine 152–glutamine 156 contribute to the substrate site. Serine 90 (nucleophile) is an active-site residue. Catalysis depends on residues aspartate 216 and histidine 244. Histidine 244 lines the substrate pocket.

It belongs to the AB hydrolase superfamily. Carboxylesterase BioH family. Monomer.

It is found in the cytoplasm. The enzyme catalyses 6-carboxyhexanoyl-[ACP] methyl ester + H2O = 6-carboxyhexanoyl-[ACP] + methanol + H(+). Its pathway is cofactor biosynthesis; biotin biosynthesis. Its function is as follows. The physiological role of BioH is to remove the methyl group introduced by BioC when the pimeloyl moiety is complete. It allows to synthesize pimeloyl-ACP via the fatty acid synthetic pathway through the hydrolysis of the ester bonds of pimeloyl-ACP esters. The protein is Pimeloyl-[acyl-carrier protein] methyl ester esterase of Nitrosospira multiformis (strain ATCC 25196 / NCIMB 11849 / C 71).